Here is a 28-residue protein sequence, read N- to C-terminus: Trypsin inhibitor A (28 aa).

3 disulfides stabilise this stretch: Cys3/Cys20, Cys10/Cys22, and Cys16/Cys27.

Belongs to the protease inhibitor I7 (squash-type serine protease inhibitor) family.

It localises to the secreted. Functionally, inhibits trypsin. This chain is Trypsin inhibitor A, found in Momordica charantia (Bitter gourd).